A 316-amino-acid polypeptide reads, in one-letter code: Glutathione synthetase (316 aa).

Residues K125–E310 enclose the ATP-grasp domain. The N-beta-linked (GlcNAc) arginine glycan is linked to R256. Positions 281 and 283 each coordinate Mg(2+).

This sequence belongs to the prokaryotic GSH synthase family. It depends on Mg(2+) as a cofactor. Mn(2+) is required as a cofactor.

It catalyses the reaction gamma-L-glutamyl-L-cysteine + glycine + ATP = glutathione + ADP + phosphate + H(+). The protein operates within sulfur metabolism; glutathione biosynthesis; glutathione from L-cysteine and L-glutamate: step 2/2. The chain is Glutathione synthetase from Escherichia coli O127:H6 (strain E2348/69 / EPEC).